Reading from the N-terminus, the 201-residue chain is Holliday junction branch migration complex subunit RuvA (201 aa).

Positions 1 to 64 are domain I; it reads MYAYIRGKLT…EDAQLLYGFI (64 aa). Positions 65-143 are domain II; sequence NEEEKDMFLS…ITRETTETLL (79 aa). A flexible linker region spans residues 144–150; sequence SMNEENS. Residues 151–201 are domain III; sequence NSENLVKEALLALEALGYSKREISKVEKVLNKSTFDSVDEAVKLGLKTLVS.

It belongs to the RuvA family. In terms of assembly, homotetramer. Forms an RuvA(8)-RuvB(12)-Holliday junction (HJ) complex. HJ DNA is sandwiched between 2 RuvA tetramers; dsDNA enters through RuvA and exits via RuvB. An RuvB hexamer assembles on each DNA strand where it exits the tetramer. Each RuvB hexamer is contacted by two RuvA subunits (via domain III) on 2 adjacent RuvB subunits; this complex drives branch migration. In the full resolvosome a probable DNA-RuvA(4)-RuvB(12)-RuvC(2) complex forms which resolves the HJ.

Its subcellular location is the cytoplasm. The RuvA-RuvB-RuvC complex processes Holliday junction (HJ) DNA during genetic recombination and DNA repair, while the RuvA-RuvB complex plays an important role in the rescue of blocked DNA replication forks via replication fork reversal (RFR). RuvA specifically binds to HJ cruciform DNA, conferring on it an open structure. The RuvB hexamer acts as an ATP-dependent pump, pulling dsDNA into and through the RuvAB complex. HJ branch migration allows RuvC to scan DNA until it finds its consensus sequence, where it cleaves and resolves the cruciform DNA. The polypeptide is Holliday junction branch migration complex subunit RuvA (Staphylococcus haemolyticus (strain JCSC1435)).